Here is a 318-residue protein sequence, read N- to C-terminus: NF-kappa-B inhibitor alpha (318 aa).

The interval 1–44 (MLSAHRPAEPPAVEGCEPPRKERQGGLLPPDDRHDSGLDSMKEE) is disordered. Over residues 17 to 44 (EPPRKERQGGLLPPDDRHDSGLDSMKEE) the composition is skewed to basic and acidic residues. A Glycyl lysine isopeptide (Lys-Gly) (interchain with G-Cter in ubiquitin) cross-link involves residue Lys-21. Phosphoserine; by IKKA and IKKB is present on Ser-36. A Phosphoserine; by IKKA, IKKB and IKKE modification is found at Ser-40. Residue Tyr-46 is modified to Phosphotyrosine; by Tyr-kinases. 4 ANK repeats span residues 114–143 (LSQT…DLDV), 147–176 (RGNT…PHHL), 186–215 (NGHT…DVNA), and 220–249 (NGRT…DVNK).

Belongs to the NF-kappa-B inhibitor family. Phosphorylated at Ser-36 and Ser-40 by IKKA/CHUK and IKKB/IKBKB; disables inhibition of NF-kappa-B DNA-binding activity. Phosphorylation at positions 36 and 40 is prerequisite to polyubiquitination and subsequent degradation. Post-translationally, monoubiquitinated at Lys-21 following phosphorylation at Ser-36 and Ser-40. The resulting polyubiquitination leads to protein degradation. In terms of processing, hydroxylated by HIF1AN. Highly expressed in lymph node, thymus followed by liver, brain, muscle, kidney, gastrointestinal and reproductive tract.

It is found in the cytoplasm. Its subcellular location is the nucleus. In terms of biological role, inhibits the activity of dimeric NF-kappa-B/REL complexes by trapping REL (RELA/p65 and NFKB1/p50) dimers in the cytoplasm by masking their nuclear localization signals. On cellular stimulation by immune and pro-inflammatory responses, becomes phosphorylated promoting ubiquitination and degradation, enabling the dimeric RELA to translocate to the nucleus and activate transcription. The sequence is that of NF-kappa-B inhibitor alpha (NFKBIA) from Gallus gallus (Chicken).